A 210-amino-acid chain; its full sequence is Thymidylate kinase (210 aa).

ATP is bound at residue 11–18 (GVDGAGKT).

This sequence belongs to the thymidylate kinase family.

The enzyme catalyses dTMP + ATP = dTDP + ADP. In terms of biological role, phosphorylation of dTMP to form dTDP in both de novo and salvage pathways of dTTP synthesis. In Mycoplasma genitalium (strain ATCC 33530 / DSM 19775 / NCTC 10195 / G37) (Mycoplasmoides genitalium), this protein is Thymidylate kinase (tmk).